A 93-amino-acid polypeptide reads, in one-letter code: MTFTVLVSVRAKRDFNRLIVWLVERDPRAAARLGPLLEAALDSLTEAPSRGRSVGPTTREISIPFGQSAYVIRYRLLGSSVHVTRIWHGLEQR.

The protein belongs to the RelE toxin family.

In terms of biological role, toxic component of a type II toxin-antitoxin (TA) system. Its toxic effect is neutralized by coexpression with cognate antitoxin RelB1 but no other ParD or RelB antitoxin. This Caulobacter vibrioides (strain ATCC 19089 / CIP 103742 / CB 15) (Caulobacter crescentus) protein is Toxin RelE1 (relE1).